The chain runs to 302 residues: Homoserine O-acetyltransferase (302 aa).

The Acyl-thioester intermediate role is filled by Cys-142. Substrate is bound by residues Lys-163 and Ser-192. Residue His-235 is the Proton acceptor of the active site. Residue Glu-237 is part of the active site. Substrate is bound at residue Arg-249.

Belongs to the MetA family.

It localises to the cytoplasm. The enzyme catalyses L-homoserine + acetyl-CoA = O-acetyl-L-homoserine + CoA. Its pathway is amino-acid biosynthesis; L-methionine biosynthesis via de novo pathway; O-acetyl-L-homoserine from L-homoserine: step 1/1. In terms of biological role, transfers an acetyl group from acetyl-CoA to L-homoserine, forming acetyl-L-homoserine. This chain is Homoserine O-acetyltransferase, found in Geobacillus sp. (strain WCH70).